A 720-amino-acid polypeptide reads, in one-letter code: Protein O-mannosyl-transferase 1 (720 aa).

A run of 8 helical transmembrane segments spans residues 7–27 (PVSV…LALF), 67–87 (FGHM…NFVW), 105–125 (LIPA…VVEL), 127–147 (YSHF…SLIV), 150–170 (RFML…LSYL), 178–198 (SFFK…GIGV), 201–221 (MGMF…WQLI), and 239–259 (FLAL…IHLT). MIR domains are found at residues 291-354 (PLDV…IKDP), 365-422 (PKPV…VDIV), and 426-486 (SEKE…VEEH). Transmembrane regions (helical) follow at residues 570 to 590 (IVTW…FLTY), 609 to 629 (LVLA…PFFL), 633 to 653 (TLFL…IPIV), and 670 to 690 (AFGG…HSLS).

Belongs to the glycosyltransferase 39 family. As to expression, widely expressed. Has particularly strong expression in testis, ovary, brain, liver and heart.

It is found in the endoplasmic reticulum membrane. The enzyme catalyses a di-trans,poly-cis-dolichyl beta-D-mannosyl phosphate + L-seryl-[protein] = 3-O-(alpha-D-mannosyl)-L-seryl-[protein] + a di-trans,poly-cis-dolichyl phosphate + H(+). It carries out the reaction a di-trans,poly-cis-dolichyl beta-D-mannosyl phosphate + L-threonyl-[protein] = 3-O-(alpha-D-mannosyl)-L-threonyl-[protein] + a di-trans,poly-cis-dolichyl phosphate + H(+). The protein operates within protein modification; protein glycosylation. Its function is as follows. Transfers mannosyl residues to the hydroxyl group of serine or threonine residues. Coexpression of both POMT1 and POMT2 is necessary for enzyme activity, expression of either POMT1 or POMT2 alone is insufficient. In Danio rerio (Zebrafish), this protein is Protein O-mannosyl-transferase 1.